A 282-amino-acid chain; its full sequence is Elongation factor Ts (282 aa).

Positions 80 to 83 are involved in Mg(2+) ion dislocation from EF-Tu; sequence TDFV.

This sequence belongs to the EF-Ts family.

The protein localises to the cytoplasm. Associates with the EF-Tu.GDP complex and induces the exchange of GDP to GTP. It remains bound to the aminoacyl-tRNA.EF-Tu.GTP complex up to the GTP hydrolysis stage on the ribosome. The protein is Elongation factor Ts of Chlamydia trachomatis serovar L2b (strain UCH-1/proctitis).